The chain runs to 187 residues: MATTNDLKNGMTLDIDGVLWNVVGFQHVKPGKGGAFVRTTLKNVLTGKVVDRTFNAGIKVDVATVDRREMTYLYRDGADFVFMDSESYDQIPVPPGVVGGVADYMLENTIATVALHDDAPLYVELPASVELTISATDPGVQGDRSTGGTKPATLETGANIQVPLFITTGEKVKVDTRDGRYLGRVTS.

It belongs to the elongation factor P family.

It localises to the cytoplasm. Its pathway is protein biosynthesis; polypeptide chain elongation. In terms of biological role, involved in peptide bond synthesis. Stimulates efficient translation and peptide-bond synthesis on native or reconstituted 70S ribosomes in vitro. Probably functions indirectly by altering the affinity of the ribosome for aminoacyl-tRNA, thus increasing their reactivity as acceptors for peptidyl transferase. The sequence is that of Elongation factor P from Parafrankia sp. (strain EAN1pec).